The following is a 182-amino-acid chain: Plasmolipin (182 aa).

The interval 1–20 is disordered; it reads MAEFPSKVNTRTSSPAQGGG. Residues 1–35 lie on the Cytoplasmic side of the membrane; that stretch reads MAEFPSKVNTRTSSPAQGGGAVVSTLSPDLGFVRS. Residues 7–16 show a composition bias toward polar residues; it reads KVNTRTSSPA. In terms of domain architecture, MARVEL spans 32 to 166; that stretch reads FVRSSLGALM…SAFLSFQAWR (135 aa). Residues 36-56 traverse the membrane as a helical segment; the sequence is SLGALMLLQLVLGLLVWALIA. At 57-68 the chain is on the extracellular side; the sequence is DTPYHLYPSYGW. A helical transmembrane segment spans residues 69–89; the sequence is VMFVAVFLWLVTIIFFVLYLF. Residues 90 to 99 lie on the Cytoplasmic side of the membrane; it reads QLHMKLYMVP. The chain crosses the membrane as a helical span at residues 100–120; the sequence is WPLVLMVFNVGATVLYITAFI. Over 121–141 the chain is Extracellular; the sequence is TCSASVELTSLKGSQPYNQRA. A helical transmembrane segment spans residues 142–162; the sequence is AASFFSCLVMIAYGVSAFLSF. Residues 163-182 lie on the Cytoplasmic side of the membrane; it reads QAWRGVGSNAATSQMAGGYA.

It belongs to the MAL family. In terms of assembly, forms oligomers. Phosphorylated.

The protein localises to the cell membrane. The protein resides in the myelin membrane. It localises to the apical cell membrane. Its function is as follows. Main component of the myelin sheath that plays an important role in myelin membrane biogenesis and myelination. Plays an essential function in apical endocytosis. Regulates epithelial development through the regulation of apical endocytosis. Part of the intracellular machinery that mediates basolateral-to-apical transport of ICAM-1, an essential adhesion receptor in epithelial cells, from the subapical compartment in hepatic epithelial cells. The chain is Plasmolipin (PLLP) from Bos taurus (Bovine).